The sequence spans 388 residues: WD repeat-containing protein 55 (388 aa).

A compositionally biased stretch (acidic residues) spans 1 to 20 (MDPTCEESPAEDSNNEEEDL). The interval 1-33 (MDPTCEESPAEDSNNEEEDLDSTKAAPRIRDTP) is disordered. WD repeat units lie at residues 37 to 76 (VLEA…GETK), 83 to 122 (HHLK…LERR), 126 to 164 (AHSA…PLMD), 167 to 206 (QHEE…FELL), 209 to 248 (PQSG…ATSD), 251 to 290 (ALRA…VVGT), and 293 to 333 (QHAG…TVVV). Phosphoserine is present on serine 355. Positions 364 to 388 (REDEEDAKAPEEVVRESDDDDDDSD) are disordered. Positions 370–379 (AKAPEEVVRE) are enriched in basic and acidic residues.

It belongs to the WD repeat WDR55 family.

The protein localises to the nucleus. It localises to the nucleolus. The protein resides in the cytoplasm. Its function is as follows. Nucleolar protein that acts as a modulator of rRNA synthesis. Plays a central role during organogenesis. The protein is WD repeat-containing protein 55 (Wdr55) of Mus musculus (Mouse).